Consider the following 556-residue polypeptide: Formate--tetrahydrofolate ligase (556 aa).

Position 65–72 (threonine 65–threonine 72) interacts with ATP.

It belongs to the formate--tetrahydrofolate ligase family.

The enzyme catalyses (6S)-5,6,7,8-tetrahydrofolate + formate + ATP = (6R)-10-formyltetrahydrofolate + ADP + phosphate. Its pathway is one-carbon metabolism; tetrahydrofolate interconversion. This chain is Formate--tetrahydrofolate ligase, found in Ruminiclostridium cellulolyticum (strain ATCC 35319 / DSM 5812 / JCM 6584 / H10) (Clostridium cellulolyticum).